We begin with the raw amino-acid sequence, 255 residues long: ATP-dependent L-serine kinase (255 aa).

E36 is an active-site residue. Residue V74 coordinates O-phospho-L-serine. D75 is a Mg(2+) binding site. The O-phospho-L-serine site is built by G76, H77, H78, W108, K234, T236, and H238.

It belongs to the SerK family. Mg(2+) is required as a cofactor.

It catalyses the reaction L-serine + ATP = O-phospho-L-serine + ADP + H(+). In terms of biological role, free serine kinase that uses ATP to phosphorylate L-serine to yield O-phospho-L-serine and ADP. The chain is ATP-dependent L-serine kinase from Desulfurococcus mucosus (strain ATCC 35584 / DSM 2162 / JCM 9187 / O7/1).